Here is a 212-residue protein sequence, read N- to C-terminus: ATP-dependent Clp protease proteolytic subunit (212 aa).

Catalysis depends on Ser109, which acts as the Nucleophile. His134 is a catalytic residue.

Belongs to the peptidase S14 family. In terms of assembly, fourteen ClpP subunits assemble into 2 heptameric rings which stack back to back to give a disk-like structure with a central cavity, resembling the structure of eukaryotic proteasomes.

The protein resides in the cytoplasm. It catalyses the reaction Hydrolysis of proteins to small peptides in the presence of ATP and magnesium. alpha-casein is the usual test substrate. In the absence of ATP, only oligopeptides shorter than five residues are hydrolyzed (such as succinyl-Leu-Tyr-|-NHMec, and Leu-Tyr-Leu-|-Tyr-Trp, in which cleavage of the -Tyr-|-Leu- and -Tyr-|-Trp bonds also occurs).. Cleaves peptides in various proteins in a process that requires ATP hydrolysis. Has a chymotrypsin-like activity. Plays a major role in the degradation of misfolded proteins. This chain is ATP-dependent Clp protease proteolytic subunit, found in Bdellovibrio bacteriovorus (strain ATCC 15356 / DSM 50701 / NCIMB 9529 / HD100).